We begin with the raw amino-acid sequence, 517 residues long: Crotonobetaine/carnitine--CoA ligase (517 aa).

Belongs to the ATP-dependent AMP-binding enzyme family.

The catalysed reaction is 4-(trimethylamino)butanoate + ATP + CoA = 4-(trimethylamino)butanoyl-CoA + AMP + diphosphate. It catalyses the reaction crotonobetaine + ATP + CoA = crotonobetainyl-CoA + AMP + diphosphate. The enzyme catalyses (R)-carnitine + ATP + CoA = (R)-carnitinyl-CoA + AMP + diphosphate. It functions in the pathway amine and polyamine metabolism; carnitine metabolism. Catalyzes the transfer of CoA to carnitine, generating the initial carnitinyl-CoA needed for the CaiB reaction cycle. Also has activity toward crotonobetaine and gamma-butyrobetaine. In Salmonella agona (strain SL483), this protein is Crotonobetaine/carnitine--CoA ligase.